A 535-amino-acid polypeptide reads, in one-letter code: Beta-amylase 1, chloroplastic (535 aa).

The N-terminal 36 residues, 1–36 (MALNLAQSAAAAACFATAGDARRAASVVAMPSSSSS), are a transit peptide targeting the chloroplast. The substrate site is built by D115, H155, and D163. The active-site Proton donor is E247. Residues K361, H366, and T408 each coordinate substrate. The active-site Proton acceptor is E446. Residues 447–448 (NA) and R480 contribute to the substrate site.

It belongs to the glycosyl hydrolase 14 family.

Its subcellular location is the plastid. It localises to the chloroplast. It catalyses the reaction Hydrolysis of (1-&gt;4)-alpha-D-glucosidic linkages in polysaccharides so as to remove successive maltose units from the non-reducing ends of the chains.. Possesses beta-amylase activity in vitro. May be involved in cold resistance by mediating the accumulation of maltose upon freezing stress, thus contributing to the protection of membranes. The polypeptide is Beta-amylase 1, chloroplastic (Oryza sativa subsp. japonica (Rice)).